The following is a 558-amino-acid chain: Glucose-6-phosphate isomerase (558 aa).

E362 functions as the Proton donor in the catalytic mechanism. Active-site residues include H393 and K523.

Belongs to the GPI family.

It localises to the cytoplasm. The catalysed reaction is alpha-D-glucose 6-phosphate = beta-D-fructose 6-phosphate. The protein operates within carbohydrate degradation; glycolysis; D-glyceraldehyde 3-phosphate and glycerone phosphate from D-glucose: step 2/4. This Drosophila simulans (Fruit fly) protein is Glucose-6-phosphate isomerase (Pgi).